Consider the following 114-residue polypeptide: Small ribosomal subunit protein uS15 (114 aa).

The protein belongs to the universal ribosomal protein uS15 family.

The sequence is that of Small ribosomal subunit protein uS15 (RpS13) from Musca domestica (House fly).